Reading from the N-terminus, the 422-residue chain is UDP-N-acetylglucosamine 1-carboxyvinyltransferase (422 aa).

Residue 22-23 (KN) participates in phosphoenolpyruvate binding. Residue R94 participates in UDP-N-acetyl-alpha-D-glucosamine binding. The active-site Proton donor is the C118. 2-(S-cysteinyl)pyruvic acid O-phosphothioketal is present on C118. Residues 123-127 (RPVDL), D309, and I331 contribute to the UDP-N-acetyl-alpha-D-glucosamine site.

The protein belongs to the EPSP synthase family. MurA subfamily.

It localises to the cytoplasm. It catalyses the reaction phosphoenolpyruvate + UDP-N-acetyl-alpha-D-glucosamine = UDP-N-acetyl-3-O-(1-carboxyvinyl)-alpha-D-glucosamine + phosphate. It functions in the pathway cell wall biogenesis; peptidoglycan biosynthesis. In terms of biological role, cell wall formation. Adds enolpyruvyl to UDP-N-acetylglucosamine. The protein is UDP-N-acetylglucosamine 1-carboxyvinyltransferase of Cereibacter sphaeroides (strain ATCC 17029 / ATH 2.4.9) (Rhodobacter sphaeroides).